A 473-amino-acid chain; its full sequence is MTIFFSVEILVLGIAEFAAIAMDAAQQGDTTTILMLPWLGYGHLSAFLELAKSLSRRNFHIYFCSTSVNLDAIKPKLPSSFSDSIQFVELHLPSSPEFPPHLHTTNGLPPTLMPALHQAFSMAAQHFESILQTLAPHLLIYDSLQPWAPRVASSLKIPAINFNTTGVFVISQGLHPIHYPHSKFPFSEFVLHNHWKAMYSTADGASTERTRKRGEAFLYCLHASCSVILINSFRELEGKYMDYLSVLLNKKVVPVGPLVYEPNQDGEDEGYSSIKNWLDKKEPSSTVFVSFGSEYFPSKEEMEEIAHGLEASEVNFIWVVRFPQGDNTSGIEDALPKGFLERAGERGMVVKGWAPQAKILKHWSTGGFVSHCGWNSVMESMMFGVPIIGVPMHVDQPFNAGLVEEAGVGVEAKRDPDGKIQRDEVAKLIKEVVVEKTREDVRKKAREMSEILRSKGEEKFDEMVAEISLLLKI.

The Proton acceptor role is filled by His43. Asp142 functions as the Charge relay in the catalytic mechanism. UDP-alpha-D-glucose is bound by residues Ser293, Gln356, Trp374, Asn375, Ser376, Glu379, Asp395, and Gln396.

This sequence belongs to the UDP-glycosyltransferase family. In terms of tissue distribution, highly expressed in mature fruits.

It carries out the reaction mogroside IIE + UDP-alpha-D-glucose = mogroside IIIX + UDP + H(+). It catalyses the reaction mogroside III + UDP-alpha-D-glucose = mogroside IV + UDP + H(+). The catalysed reaction is mogroside III + UDP-alpha-D-glucose = siamenoside I + UDP + H(+). The enzyme catalyses mogroside IIIX + UDP-alpha-D-glucose = mogroside IVA + UDP + H(+). It carries out the reaction mogroside IIIX + UDP-alpha-D-glucose = siamenoside I + UDP + H(+). It catalyses the reaction mogroside IV + UDP-alpha-D-glucose = mogroside V + UDP + H(+). The catalysed reaction is siamenoside I + UDP-alpha-D-glucose = mogroside V + UDP + H(+). The enzyme catalyses mogroside V + UDP-alpha-D-glucose = mogroside VI + UDP + H(+). It functions in the pathway secondary metabolite biosynthesis; terpenoid biosynthesis. Activity is increased by Mg(2+). Functionally, UDP-glycosyltransferase involved in the biosynthesis of cucurbitacin and mogroside tetracyclic triterpene natural products (e.g. siamenoside I and mogrosides IV, V and VI). Cucurbitacins have cytotoxic properties and exhibit deterrent taste as a defense barrier against herbivores. Mogrosides are nonsugar highly oxygenated compounds used as high-intensity zero-calorie sweeteners; they also possess pharmacological properties such as regulating immunity, lowering blood sugar and lipid levels, protecting the liver, and acting as antioxidants and antitumor agents. Its function is as follows. Catalyzes the branched glucosylations of mogroside II-E, mogroside III, mogroside IIIx, mogroside IV, mogroside IV-A, siamenoside I and mogroside V, ending in the production of mogroside VI. In terms of biological role, catalyzes the beta(1-6) branched glucosylations of mogroside II-E to produce mogroside IIIx by forming a beta(1-6) glycosidic bond with the 6-hydroxyl of glucose 1-C24; a subsequent glycosylation at glucose 1-C3 leads to the formation of mogroside IV-A with beta(1-6) glycosidic bond. Can also use mogroside III-E, mogroside III-A, mogroside IV-E and mogroside IV-A as substrates. This Siraitia grosvenorii (Monk's fruit) protein is Mogroside IIIx synthase.